The chain runs to 468 residues: Glutamate--tRNA ligase 2 (468 aa).

Positions 11–21 match the 'HIGH' region motif; the sequence is PSPTGFLHIGG. The 'KMSKS' region motif lies at 239–243; the sequence is KLSKR. Lys242 provides a ligand contact to ATP.

The protein belongs to the class-I aminoacyl-tRNA synthetase family. Glutamate--tRNA ligase type 1 subfamily. As to quaternary structure, monomer.

The protein resides in the cytoplasm. The enzyme catalyses tRNA(Glu) + L-glutamate + ATP = L-glutamyl-tRNA(Glu) + AMP + diphosphate. In terms of biological role, catalyzes the attachment of glutamate to tRNA(Glu) in a two-step reaction: glutamate is first activated by ATP to form Glu-AMP and then transferred to the acceptor end of tRNA(Glu). The sequence is that of Glutamate--tRNA ligase 2 from Ruegeria pomeroyi (strain ATCC 700808 / DSM 15171 / DSS-3) (Silicibacter pomeroyi).